We begin with the raw amino-acid sequence, 267 residues long: Hydroxyethylthiazole kinase (267 aa).

M46 is a substrate binding site. The ATP site is built by R121 and T167. A194 is a substrate binding site.

This sequence belongs to the Thz kinase family. It depends on Mg(2+) as a cofactor.

The catalysed reaction is 5-(2-hydroxyethyl)-4-methylthiazole + ATP = 4-methyl-5-(2-phosphooxyethyl)-thiazole + ADP + H(+). Its pathway is cofactor biosynthesis; thiamine diphosphate biosynthesis; 4-methyl-5-(2-phosphoethyl)-thiazole from 5-(2-hydroxyethyl)-4-methylthiazole: step 1/1. Catalyzes the phosphorylation of the hydroxyl group of 4-methyl-5-beta-hydroxyethylthiazole (THZ). The sequence is that of Hydroxyethylthiazole kinase from Rhizobium johnstonii (strain DSM 114642 / LMG 32736 / 3841) (Rhizobium leguminosarum bv. viciae).